We begin with the raw amino-acid sequence, 325 residues long: Holliday junction branch migration complex subunit RuvB (325 aa).

Positions 1 to 180 (MKNQLLDAKV…FGIHLKLNFY (180 aa)) are large ATPase domain (RuvB-L). ATP is bound by residues Leu19, Arg20, Gly61, Lys64, Thr65, Ser66, 127 to 129 (EDF), Arg170, Tyr180, and Arg217. Residue Thr65 coordinates Mg(2+). The interval 181-251 (SCEELTQIVE…ITDYALNQLG (71 aa)) is small ATPAse domain (RuvB-S). Positions 254–325 (KLGLDSSDHK…ITANALKHLH (72 aa)) are head domain (RuvB-H). 3 residues coordinate DNA: Arg290, Arg309, and Arg314.

It belongs to the RuvB family. As to quaternary structure, homohexamer. Forms an RuvA(8)-RuvB(12)-Holliday junction (HJ) complex. HJ DNA is sandwiched between 2 RuvA tetramers; dsDNA enters through RuvA and exits via RuvB. An RuvB hexamer assembles on each DNA strand where it exits the tetramer. Each RuvB hexamer is contacted by two RuvA subunits (via domain III) on 2 adjacent RuvB subunits; this complex drives branch migration. In the full resolvosome a probable DNA-RuvA(4)-RuvB(12)-RuvC(2) complex forms which resolves the HJ.

Its subcellular location is the cytoplasm. The catalysed reaction is ATP + H2O = ADP + phosphate + H(+). Its function is as follows. The RuvA-RuvB-RuvC complex processes Holliday junction (HJ) DNA during genetic recombination and DNA repair, while the RuvA-RuvB complex plays an important role in the rescue of blocked DNA replication forks via replication fork reversal (RFR). RuvA specifically binds to HJ cruciform DNA, conferring on it an open structure. The RuvB hexamer acts as an ATP-dependent pump, pulling dsDNA into and through the RuvAB complex. RuvB forms 2 homohexamers on either side of HJ DNA bound by 1 or 2 RuvA tetramers; 4 subunits per hexamer contact DNA at a time. Coordinated motions by a converter formed by DNA-disengaged RuvB subunits stimulates ATP hydrolysis and nucleotide exchange. Immobilization of the converter enables RuvB to convert the ATP-contained energy into a lever motion, pulling 2 nucleotides of DNA out of the RuvA tetramer per ATP hydrolyzed, thus driving DNA branch migration. The RuvB motors rotate together with the DNA substrate, which together with the progressing nucleotide cycle form the mechanistic basis for DNA recombination by continuous HJ branch migration. Branch migration allows RuvC to scan DNA until it finds its consensus sequence, where it cleaves and resolves cruciform DNA. The protein is Holliday junction branch migration complex subunit RuvB of Orientia tsutsugamushi (strain Boryong) (Rickettsia tsutsugamushi).